We begin with the raw amino-acid sequence, 71 residues long: uncharacterized protein (71 aa).

The chain crosses the membrane as a helical span at residues 12 to 34 (YLYNYFSSTTSWLVFIILSLDTI).

It is found in the membrane. This is an uncharacterized protein from Schizosaccharomyces pombe (strain 972 / ATCC 24843) (Fission yeast).